A 374-amino-acid chain; its full sequence is Protein FAM199X (374 aa).

Positions 238-343 (YIREHSPRQR…QLKEQRQARK (106 aa)) are disordered. Low complexity predominate over residues 261–295 (SNGSTSGVSAHSSSNASMVSSTSSSTASTGSNSST). Basic residues predominate over residues 315-334 (DSKKRSKQRKMQQKALRKRQ). Residues 317-346 (KKRSKQRKMQQKALRKRQLKEQRQARKERL) adopt a coiled-coil conformation.

Belongs to the FAM199 family.

The sequence is that of Protein FAM199X (fam199x) from Danio rerio (Zebrafish).